A 93-amino-acid chain; its full sequence is Pyrimidine/purine nucleoside phosphorylase (93 aa).

This sequence belongs to the nucleoside phosphorylase PpnP family.

It catalyses the reaction a purine D-ribonucleoside + phosphate = a purine nucleobase + alpha-D-ribose 1-phosphate. The catalysed reaction is adenosine + phosphate = alpha-D-ribose 1-phosphate + adenine. It carries out the reaction cytidine + phosphate = cytosine + alpha-D-ribose 1-phosphate. The enzyme catalyses guanosine + phosphate = alpha-D-ribose 1-phosphate + guanine. It catalyses the reaction inosine + phosphate = alpha-D-ribose 1-phosphate + hypoxanthine. The catalysed reaction is thymidine + phosphate = 2-deoxy-alpha-D-ribose 1-phosphate + thymine. It carries out the reaction uridine + phosphate = alpha-D-ribose 1-phosphate + uracil. The enzyme catalyses xanthosine + phosphate = alpha-D-ribose 1-phosphate + xanthine. Its function is as follows. Catalyzes the phosphorolysis of diverse nucleosides, yielding D-ribose 1-phosphate and the respective free bases. Can use uridine, adenosine, guanosine, cytidine, thymidine, inosine and xanthosine as substrates. Also catalyzes the reverse reactions. The sequence is that of Pyrimidine/purine nucleoside phosphorylase from Aliivibrio fischeri (strain ATCC 700601 / ES114) (Vibrio fischeri).